A 261-amino-acid chain; its full sequence is Gap junction beta-6 protein (261 aa).

Over 1–22 (MDWGTLHTFIGGVNKHSTSIGK) the chain is Cytoplasmic. The chain crosses the membrane as a helical span at residues 23-45 (VWITVIFIFRVMILVVAAQEVWG). Over 46–75 (DEQEDFVCNTLQPGCKNVCYDHFFPVSHIR) the chain is Extracellular. The helical transmembrane segment at 76-98 (LWALQLIFVSTPALLVAMHVAYY) threads the bilayer. The Cytoplasmic segment spans residues 99-131 (RHETTRKFRRGEKRNDFKDIEDIKKQKVRIEGS). The chain crosses the membrane as a helical span at residues 132 to 154 (LWWTYTSSIFFRIIFEAAFMYVF). At 155-192 (YFLYNGYHLPWVLKCGIDPCPNLVDCFISRPTEKTVFT) the chain is on the extracellular side. A helical membrane pass occupies residues 193–215 (IFMISASVICMLLNVAELCYLLL). Topologically, residues 216–261 (KVCFRRSKRAQTQKNHPNHALKESKQNEMNELISDSGQNAITGFPS) are cytoplasmic.

It belongs to the connexin family. Beta-type (group I) subfamily. As to quaternary structure, a connexon is composed of a hexamer of connexins. Interacts with CNST.

The protein localises to the cell membrane. The protein resides in the cell junction. Its subcellular location is the gap junction. One gap junction consists of a cluster of closely packed pairs of transmembrane channels, the connexons, through which materials of low MW diffuse from one cell to a neighboring cell. The protein is Gap junction beta-6 protein (GJB6) of Homo sapiens (Human).